Reading from the N-terminus, the 555-residue chain is E3 ubiquitin-protein ligase ARIH1 (555 aa).

Residues Met1–Leu47 are compositionally biased toward acidic residues. The interval Met1–Gln93 is disordered. The span at Glu65–Gly90 shows a compositional bias: gly residues. The UBA-like stretch occupies residues Thr103–Asn151. Lys140 carries the N6-acetyllysine modification. The TRIAD supradomain stretch occupies residues Gln180–Asn391. Zn(2+) contacts are provided by Cys184, Cys187, Cys201, His203, Cys206, Cys209, Cys229, Cys234, Cys274, Cys279, Cys295, Cys297, Cys302, Cys305, His310, Cys315, Cys342, and Cys345. An RING-type 1 zinc finger spans residues Cys184–Cys234. The segment at Leu254–Cys315 adopts an IBR-type zinc-finger fold. The segment at Cys342–Cys373 adopts an RING-type 2; atypical zinc-finger fold. Cys355 is an active-site residue. Zn(2+) contacts are provided by Cys360, Cys365, Cys370, Cys373, His380, and Cys387. Residues Arg406–Asp555 are ariadne domain.

The protein belongs to the RBR family. Ariadne subfamily. As to quaternary structure, interacts (via the first RING-type zinc finger) with UBE2L3. Associates with cullin-RING ubiquitin ligase (CRL) complexes containing CUL1, CUL2 and CUL3. Interacts with neddylated CUL1. Interacts with neddylated CUL2. Interacts with neddylated CUL3. Interacts with neddylated CUL4A.

The protein localises to the cytoplasm. Its subcellular location is the nucleus. It is found in the cajal body. The catalysed reaction is [E2 ubiquitin-conjugating enzyme]-S-ubiquitinyl-L-cysteine + [acceptor protein]-L-lysine = [E2 ubiquitin-conjugating enzyme]-L-cysteine + [acceptor protein]-N(6)-ubiquitinyl-L-lysine.. It functions in the pathway protein modification; protein ubiquitination. With respect to regulation, autoinhibited by the ariadne domain, which masks the second RING-type zinc finger that contains the active site and inhibits the E3 activity. Inhibition is relieved upon binding to neddylated cullin-RING ubiquitin ligase complexes, which activate the E3 ligase activity of ARIH1. E3 ubiquitin-protein ligase, which catalyzes ubiquitination of target proteins together with ubiquitin-conjugating enzyme E2 UBE2L3. Acts as an atypical E3 ubiquitin-protein ligase by working together with cullin-RING ubiquitin ligase (CRL) complexes and initiating ubiquitination of CRL substrates: associates with CRL complexes and specifically mediates addition of the first ubiquitin on CRLs targets. The initial ubiquitin is then elongated by CDC34/UBE2R1 and UBE2R2. E3 ubiquitin-protein ligase activity is activated upon binding to neddylated cullin-RING ubiquitin ligase complexes. Plays a role in protein translation in response to DNA damage by mediating ubiquitination of EIF4E2, the consequences of EIF4E2 ubiquitination are however unclear. According to a report, EIF4E2 ubiquitination leads to promote EIF4E2 cap-binding and protein translation arrest. According to another report EIF4E2 ubiquitination leads to its subsequent degradation. Acts as the ligase involved in ISGylation of EIF4E2. In vitro, controls the degradation of the LINC (LInker of Nucleoskeleton and Cytoskeleton) complex member SUN2 and may therefore have a role in the formation and localization of the LINC complex, and as a consequence, may act in nuclear subcellular localization and nuclear morphology. The chain is E3 ubiquitin-protein ligase ARIH1 (ARIH1) from Bos taurus (Bovine).